The primary structure comprises 103 residues: Large ribosomal subunit protein bL21 (103 aa).

This sequence belongs to the bacterial ribosomal protein bL21 family. Part of the 50S ribosomal subunit. Contacts protein L20.

This protein binds to 23S rRNA in the presence of protein L20. This is Large ribosomal subunit protein bL21 from Ruminiclostridium cellulolyticum (strain ATCC 35319 / DSM 5812 / JCM 6584 / H10) (Clostridium cellulolyticum).